The chain runs to 87 residues: UPF0250 protein Spro_1197 (87 aa).

Belongs to the UPF0250 family.

In Serratia proteamaculans (strain 568), this protein is UPF0250 protein Spro_1197.